The chain runs to 304 residues: Undecaprenyl-diphosphatase (304 aa).

8 helical membrane passes run 5 to 25 (FLFI…EFVP), 47 to 67 (GFPE…VVVL), 72 to 92 (ISSS…LKAS), 111 to 131 (FGIN…LFHD), 137 to 157 (LFST…LIVI), 209 to 231 (ISGL…AMVG), 248 to 268 (TNLI…LVVI), and 282 to 302 (IFAI…FTKV).

Belongs to the UppP family.

It is found in the cell membrane. It catalyses the reaction di-trans,octa-cis-undecaprenyl diphosphate + H2O = di-trans,octa-cis-undecaprenyl phosphate + phosphate + H(+). Its function is as follows. Catalyzes the dephosphorylation of undecaprenyl diphosphate (UPP). Confers resistance to bacitracin. This is Undecaprenyl-diphosphatase from Clostridium perfringens (strain SM101 / Type A).